A 417-amino-acid chain; its full sequence is MDLVEAEAEEQPPDEDGDEEGYVEADPAGRFIRYDEIVGSGAVKTVYKAFDKLEGVEVAWSQSRIDDSVMGSSKKMKQLNTEIQLLKTLKHKNIEKMFASWVDGEKKTVNIITELFTSGSLTQYRRKHKKVNMKAMKRWAIQILTGLEYLHSQKPAIIHRDLKCDNIFINGNHGKVKIGDFGLATFMQQQKKSIKGTLEFMAPELLTGHYNELVDIYSFGMCMLEMVTCEYPYSECQGMAHIFKKIDEGKKPAAFYKIKDAEVRSFIENCLAPVENRMSATELLKSSFLQDDDLISVSLVKNMSEDGQQPVSCMLRKGEFLLTGNVDVASHVDLWLRFPDPSGCFKSVEFPFNLTEDTSLSVAVEMVEQFGLTQDSRPIIAQLIDAFLVILIPEWTPCVAIRQVVSEGANGLTIEKR.

The disordered stretch occupies residues methionine 1–valine 23. Residues isoleucine 32–leucine 289 form the Protein kinase domain. Residues threonine 113–phenylalanine 116 and lysine 163 contribute to the ATP site. The active-site Proton acceptor is aspartate 180.

Belongs to the protein kinase superfamily. Ser/Thr protein kinase family. WNK subfamily.

The catalysed reaction is L-seryl-[protein] + ATP = O-phospho-L-seryl-[protein] + ADP + H(+). The enzyme catalyses L-threonyl-[protein] + ATP = O-phospho-L-threonyl-[protein] + ADP + H(+). This chain is Probable serine/threonine-protein kinase WNK9 (WNK9), found in Oryza sativa subsp. japonica (Rice).